Here is a 300-residue protein sequence, read N- to C-terminus: Elongator complex protein 5 (300 aa).

The residue at position 252 (S252) is a Phosphoserine. Residues 264–300 (QQALLRPRPGQATSHIFYEPDAYDDLDQEDPDDDLDI) are disordered. Acidic residues predominate over residues 284–300 (DAYDDLDQEDPDDDLDI).

It belongs to the ELP5 family. Component of the elongator complex which consists of ELP1, ELP2, ELP3, ELP4, ELP5 and ELP6; in the complex, is required for optimal binding of ELP3 to ELP4. Tyrosine-phosphorylated. In terms of tissue distribution, ubiquitously expressed with high levels in heart, brain, liver, skeletal muscle and testis.

The protein localises to the nucleus. It is found in the cytoplasm. The protein operates within tRNA modification; 5-methoxycarbonylmethyl-2-thiouridine-tRNA biosynthesis. Component of the elongator complex which is required for multiple tRNA modifications, including mcm5U (5-methoxycarbonylmethyl uridine), mcm5s2U (5-methoxycarbonylmethyl-2-thiouridine), and ncm5U (5-carbamoylmethyl uridine). The elongator complex catalyzes formation of carboxymethyluridine in the wobble base at position 34 in tRNAs. Involved in cell migration. This is Elongator complex protein 5 from Homo sapiens (Human).